Here is a 141-residue protein sequence, read N- to C-terminus: Hemoglobin subunit alpha-1/2 (141 aa).

The region spanning 1 to 141 is the Globin domain; that stretch reads VLSPADKTNV…VSTVLTSKYR (141 aa). Phosphoserine is present on serine 3. Lysine 7 bears the N6-succinyllysine mark. A Phosphothreonine modification is found at threonine 8. An N6-succinyllysine modification is found at lysine 11. Lysine 16 is modified (N6-acetyllysine; alternate). N6-succinyllysine; alternate is present on lysine 16. Tyrosine 24 is subject to Phosphotyrosine. Serine 35 carries the post-translational modification Phosphoserine. Lysine 40 bears the N6-succinyllysine mark. Residue serine 49 is modified to Phosphoserine. An O2-binding site is contributed by histidine 58. Histidine 87 serves as a coordination point for heme b. Phosphoserine is present on serine 102. At threonine 108 the chain carries Phosphothreonine. 2 positions are modified to phosphoserine: serine 124 and serine 131. A phosphothreonine mark is found at threonine 134 and threonine 137. Residue serine 138 is modified to Phosphoserine.

This sequence belongs to the globin family. Heterotetramer of two alpha chains and two beta chains. In terms of tissue distribution, red blood cells.

Functionally, involved in oxygen transport from the lung to the various peripheral tissues. The protein is Hemoglobin subunit alpha-1/2 of Macaca sinica (Toque macaque).